We begin with the raw amino-acid sequence, 38 residues long: Large ribosomal subunit protein bL36A (38 aa).

The protein belongs to the bacterial ribosomal protein bL36 family.

The protein is Large ribosomal subunit protein bL36A of Prochlorococcus marinus (strain MIT 9515).